A 320-amino-acid polypeptide reads, in one-letter code: Olfactory receptor 52N1 (320 aa).

Over Met1–Leu27 the chain is Extracellular. Asn5 carries an N-linked (GlcNAc...) asparagine glycan. The chain crosses the membrane as a helical span at residues Trp28–Met48. Topologically, residues Tyr49–Ala56 are cytoplasmic. The chain crosses the membrane as a helical span at residues Leu57–Thr77. Residues Ser78–Ala101 lie on the Extracellular side of the membrane. Cys99 and Cys191 are joined by a disulfide. A helical membrane pass occupies residues Gln102–Leu122. At Asp123–Ser141 the chain is on the cytoplasmic side. A helical membrane pass occupies residues Val142 to Thr162. The Extracellular portion of the chain corresponds to Phe163–Ala198. Residues Ile199–Ser219 traverse the membrane as a helical segment. At Tyr220–Ala239 the chain is on the cytoplasmic side. The helical transmembrane segment at Phe240 to Thr260 threads the bilayer. At Phe261–His276 the chain is on the extracellular side. Residues Ile277–Val297 form a helical membrane-spanning segment. The Cytoplasmic segment spans residues Lys298 to Phe320.

This sequence belongs to the G-protein coupled receptor 1 family.

It is found in the cell membrane. In terms of biological role, odorant receptor. This Homo sapiens (Human) protein is Olfactory receptor 52N1 (OR52N1).